Consider the following 1487-residue polypeptide: Collagen alpha-1(II) chain (1487 aa).

The first 25 residues, Met1–Gly25, serve as a signal peptide directing secretion. A propeptide spans Gln26–Ala181 (N-terminal propeptide). A VWFC domain is found at Gly32–Pro89. The disordered stretch occupies residues Ser96–Phe179. 2 stretches are compositionally biased toward basic and acidic residues: residues Gln104 to Ile115 and Pro132 to Glu153. Residues Pro157–Pro172 show a composition bias toward pro residues. 5-hydroxylysine is present on Lys190. Residue Lys190 is glycosylated (O-linked (Gal...) hydroxylysine). The tract at residues Ala191–Gln1237 is disordered. A compositionally biased stretch (low complexity) spans Gly192–Met203. Positions Gly201–Pro1214 are triple-helical region. Pro residues predominate over residues Pro208–Ala217. Over residues Pro218–Met239 the composition is skewed to low complexity. Positions Pro251 to Glu265 are enriched in basic and acidic residues. 5-hydroxylysine is present on residues Lys287, Lys299, and Lys308. 3 O-linked (Gal...) hydroxylysine glycosylation sites follow: Lys287, Lys299, and Lys308. Low complexity-rich tracts occupy residues Glu310–Pro320 and Thr335–Pro350. The segment covering Gly360–Gly369 has biased composition (gly residues). Composition is skewed to low complexity over residues Ala370–Ala382 and Pro403–Pro431. Residue Lys374 is modified to 5-hydroxylysine. Lys374 carries O-linked (Gal...) hydroxylysine glycosylation. Residues Phe433–Pro442 are compositionally biased toward pro residues. A compositionally biased stretch (low complexity) spans Glu472 to Ala485. Residues Lys608 and Lys620 each carry the 5-hydroxylysine modification. O-linked (Gal...) hydroxylysine glycans are attached at residues Lys608 and Lys620. Low complexity predominate over residues Leu622–Leu631. 4-hydroxyproline occurs at positions 659 and 668. A 3-hydroxyproline modification is found at Pro670. 4-hydroxyproline is present on residues Pro671 and Pro674. The span at Glu706–Pro736 shows a compositional bias: low complexity. Residues Lys764–Pro775 are compositionally biased toward basic and acidic residues. Composition is skewed to low complexity over residues Ala833 to Lys848 and Pro877 to Pro914. Pro907 is modified (3-hydroxyproline). Pro908, Pro914, and Pro920 each carry 4-hydroxyproline. A compositionally biased stretch (low complexity) spans Asp962–Arg980. Residues Ala1069–Ala1079 are compositionally biased toward pro residues. Basic and acidic residues predominate over residues Arg1115–Leu1129. The residue at position 1144 (Pro1144) is a 3-hydroxyproline. Composition is skewed to low complexity over residues Ser1148 to Ala1157 and Pro1171 to Pro1181. At Pro1181 the chain carries 4-hydroxyproline. A 3-hydroxyproline modification is found at Pro1186. Pro1187 is subject to 4-hydroxyproline. Residues Val1199–Pro1216 show a composition bias toward pro residues. A 3-hydroxyproline modification is found at Pro1201. 2 positions are modified to 4-hydroxyproline: Pro1202 and Pro1205. At Pro1207 the chain carries 3-hydroxyproline. A 4-hydroxyproline mark is found at Pro1208 and Pro1211. Pro1213 carries the 3-hydroxyproline modification. Pro1214 is modified (4-hydroxyproline). Residues Gly1215–Ala1241 are nonhelical region (C-terminal). A Fibrillar collagen NC1 domain is found at Val1253–Leu1487. Disulfide bonds link Cys1283–Cys1315, Cys1323–Cys1485, and Cys1393–Cys1438. 5 residues coordinate Ca(2+): Asp1301, Asn1303, Gln1304, Cys1306, and Asp1309.

The protein belongs to the fibrillar collagen family. In terms of assembly, homotrimers of alpha 1(II) chains. Post-translationally, contains mostly 4-hydroxyproline. Prolines at the third position of the tripeptide repeating unit (G-X-P) are 4-hydroxylated in some or all of the chains. Contains 3-hydroxyproline at a few sites. This modification occurs on the first proline residue in the sequence motif Gly-Pro-Hyp, where Hyp is 4-hydroxyproline. In terms of processing, lysine residues at the third position of the tripeptide repeating unit (G-X-Y) are 5-hydroxylated in some or all of the chains. Post-translationally, O-glycosylated on hydroxylated lysine residues. The O-linked glycan consists of a Glc-Gal disaccharide.

It is found in the secreted. The protein resides in the extracellular space. It localises to the extracellular matrix. Its function is as follows. Type II collagen is specific for cartilaginous tissues. It is essential for the normal embryonic development of the skeleton, for linear growth and for the ability of cartilage to resist compressive forces. The protein is Collagen alpha-1(II) chain of Mus musculus (Mouse).